Consider the following 554-residue polypeptide: Chaperonin GroEL (554 aa).

ATP is bound by residues Thr-30–Pro-33, Lys-51, Asp-87–Thr-91, Gly-415, Asp-478–Ala-480, and Asp-494.

Belongs to the chaperonin (HSP60) family. Forms a cylinder of 14 subunits composed of two heptameric rings stacked back-to-back. Interacts with the co-chaperonin GroES.

Its subcellular location is the cytoplasm. It carries out the reaction ATP + H2O + a folded polypeptide = ADP + phosphate + an unfolded polypeptide.. Functionally, together with its co-chaperonin GroES, plays an essential role in assisting protein folding. The GroEL-GroES system forms a nano-cage that allows encapsulation of the non-native substrate proteins and provides a physical environment optimized to promote and accelerate protein folding. The chain is Chaperonin GroEL from Pelobacter propionicus (strain DSM 2379 / NBRC 103807 / OttBd1).